We begin with the raw amino-acid sequence, 298 residues long: Zinc import ATP-binding protein ZnuC (298 aa).

The region spanning 17 to 232 (IELRNAGVYR…PEYVRLFGSR (216 aa)) is the ABC transporter domain. 49–56 (GPNGAGKS) provides a ligand contact to ATP. The interval 273-298 (RGHCHVEDGHHHDHEHHHHEGGQPRA) is disordered. Residues 276–298 (CHVEDGHHHDHEHHHHEGGQPRA) are compositionally biased toward basic and acidic residues.

Belongs to the ABC transporter superfamily. Zinc importer (TC 3.A.1.15.5) family. As to quaternary structure, the complex is composed of two ATP-binding proteins (ZnuC), two transmembrane proteins (ZnuB) and a solute-binding protein (ZnuA).

The protein resides in the cell inner membrane. The catalysed reaction is Zn(2+)(out) + ATP(in) + H2O(in) = Zn(2+)(in) + ADP(in) + phosphate(in) + H(+)(in). In terms of biological role, part of the ABC transporter complex ZnuABC involved in zinc import. Responsible for energy coupling to the transport system. The sequence is that of Zinc import ATP-binding protein ZnuC from Brucella abortus (strain 2308).